The primary structure comprises 375 residues: DNA replication and repair protein RecF (375 aa).

30-37 (GKNAQGKT) is an ATP binding site.

This sequence belongs to the RecF family.

It localises to the cytoplasm. Functionally, the RecF protein is involved in DNA metabolism; it is required for DNA replication and normal SOS inducibility. RecF binds preferentially to single-stranded, linear DNA. It also seems to bind ATP. The chain is DNA replication and repair protein RecF from Lactobacillus acidophilus (strain ATCC 700396 / NCK56 / N2 / NCFM).